A 397-amino-acid polypeptide reads, in one-letter code: MDFSTHRLTTLLLLLLATVALGNAQSSQLTVDSHDITVLLNSNETFLVFANGLLDSDVEVALGTDSEDHLLLDPATFVYPAGSTRNQSVVITGLKAGNVKVVADSDDANKEIVKDVFVRVTVAKSRALIYTSIIFGWVYFVAWSVSFYPQIWSNYRRKSVEGLNFDFLALNIVGFTLYSMFNCGLYFIEDLQNEYEVRYPLGVNPVMLNDVVFSLHAMFATCITILQCFFYQRAQQRVSFIAYGILAIFAVVVVVSAGLAGGSVIHWLDFLYYCSYVKLTITIIKYVPQALMNYRRKSTSGWSIGNILLDFTGGTLSMLQMILNAHNYDDWVSIFGDPTKFGLGLFSVLFDVFFMLQHYVFYRHSRESSSSDLTTVTDVQNRTNESPPPSEVTTEKY.

The signal sequence occupies residues 1-24 (MDFSTHRLTTLLLLLLATVALGNA). The Lumenal portion of the chain corresponds to 25-126 (QSSQLTVDSH…FVRVTVAKSR (102 aa)). Asn-43 and Asn-86 each carry an N-linked (GlcNAc...) asparagine glycan. A helical membrane pass occupies residues 127-147 (ALIYTSIIFGWVYFVAWSVSF). The region spanning 132–187 (SIIFGWVYFVAWSVSFYPQIWSNYRRKSVEGLNFDFLALNIVGFTLYSMFNCGLYF) is the PQ-loop 1 domain. At 148–167 (YPQIWSNYRRKSVEGLNFDF) the chain is on the cytoplasmic side. The helical transmembrane segment at 168–188 (LALNIVGFTLYSMFNCGLYFI) threads the bilayer. Residues 189–210 (EDLQNEYEVRYPLGVNPVMLND) lie on the Lumenal side of the membrane. Residues 211 to 231 (VVFSLHAMFATCITILQCFFY) form a helical membrane-spanning segment. Over 232-239 (QRAQQRVS) the chain is Cytoplasmic. Residues 240–260 (FIAYGILAIFAVVVVVSAGLA) form a helical membrane-spanning segment. The Lumenal portion of the chain corresponds to 261-263 (GGS). The helical transmembrane segment at 264–284 (VIHWLDFLYYCSYVKLTITII) threads the bilayer. Residues 271–327 (LYYCSYVKLTITIIKYVPQALMNYRRKSTSGWSIGNILLDFTGGTLSMLQMILNAHN) enclose the PQ-loop 2 domain. Residues 285–302 (KYVPQALMNYRRKSTSGW) lie on the Cytoplasmic side of the membrane. A helical membrane pass occupies residues 303–323 (SIGNILLDFTGGTLSMLQMIL). Over 324 to 340 (NAHNYDDWVSIFGDPTK) the chain is Lumenal. A helical membrane pass occupies residues 341–361 (FGLGLFSVLFDVFFMLQHYVF). The Cytoplasmic portion of the chain corresponds to 362 to 397 (YRHSRESSSSDLTTVTDVQNRTNESPPPSEVTTEKY). Positions 373 to 385 (LTTVTDVQNRTNE) are enriched in polar residues. Residues 373 to 397 (LTTVTDVQNRTNESPPPSEVTTEKY) are disordered.

The protein belongs to the cystinosin family.

The protein resides in the lysosome membrane. It carries out the reaction L-cystine(out) + H(+)(out) = L-cystine(in) + H(+)(in). Its function is as follows. Cystine/H(+) symporter that mediates export of cystine, the oxidized dimer of cysteine, from lysosomes. Involved in cysteine homeostasis during periods of fasting, which indirectly regulates mTORC1-mediated signaling by supporting de novo CoA synthesis, the TCA cycle and amino acid metabolism during periods of food shortage. Important for maintaining autophagy, and for development and survival during periods of fasting. The protein is Cystinosin of Drosophila melanogaster (Fruit fly).